A 384-amino-acid chain; its full sequence is DNA replication and repair protein RecF (384 aa).

ATP is bound at residue 43–50; the sequence is GENGSGKT.

It belongs to the RecF family.

Its subcellular location is the cytoplasm. Its function is as follows. The RecF protein is involved in DNA metabolism; it is required for DNA replication and normal SOS inducibility. RecF binds preferentially to single-stranded, linear DNA. It also seems to bind ATP. The sequence is that of DNA replication and repair protein RecF from Brucella abortus (strain 2308).